A 364-amino-acid chain; its full sequence is Aminomethyltransferase (364 aa).

This sequence belongs to the GcvT family. As to quaternary structure, the glycine cleavage system is composed of four proteins: P, T, L and H.

The enzyme catalyses N(6)-[(R)-S(8)-aminomethyldihydrolipoyl]-L-lysyl-[protein] + (6S)-5,6,7,8-tetrahydrofolate = N(6)-[(R)-dihydrolipoyl]-L-lysyl-[protein] + (6R)-5,10-methylene-5,6,7,8-tetrahydrofolate + NH4(+). Functionally, the glycine cleavage system catalyzes the degradation of glycine. The sequence is that of Aminomethyltransferase from Anoxybacillus flavithermus (strain DSM 21510 / WK1).